A 607-amino-acid polypeptide reads, in one-letter code: F-box protein At-B (607 aa).

One can recognise an F-box domain in the interval 9–47 (LAEEILKRLDLENLCSVACVSTTLRSAVVSGVLPSLTSL). LRR repeat units lie at residues 51 to 76 (VFSP…TLNC), 77 to 99 (LRLN…HLLR), 100 to 125 (CSLL…TLEM), 130 to 155 (SPDV…QLNI), 228 to 253 (LDLI…DLED), 262 to 286 (DNDL…SLVR), 295 to 320 (FKRI…RLGG), 321 to 346 (FPKV…EVRG), 347 to 372 (AFLL…RLST), 373 to 397 (CPLI…DLGS), 398 to 422 (CKSI…NLAG), 424 to 447 (DVTD…SLRG), 448 to 477 (CRRV…DLGH), 478 to 503 (MPGI…SIRS), 504 to 536 (CFHV…NVHN), and 537 to 563 (CVSL…GMGQ).

In Arabidopsis thaliana (Mouse-ear cress), this protein is F-box protein At-B (ATB).